Consider the following 553-residue polypeptide: Urocanate hydratase (553 aa).

Residues 45 to 46 (GG), Q123, 169 to 171 (GMG), D189, R194, 235 to 236 (NA), 256 to 260 (QTSAH), 266 to 267 (YV), Y315, and G485 each bind NAD(+).

This sequence belongs to the urocanase family. The cofactor is NAD(+).

It localises to the cytoplasm. It catalyses the reaction 4-imidazolone-5-propanoate = trans-urocanate + H2O. The protein operates within amino-acid degradation; L-histidine degradation into L-glutamate; N-formimidoyl-L-glutamate from L-histidine: step 2/3. In terms of biological role, catalyzes the conversion of urocanate to 4-imidazolone-5-propionate. The polypeptide is Urocanate hydratase (Staphylococcus aureus (strain COL)).